The chain runs to 429 residues: Histidine--tRNA ligase (429 aa).

Belongs to the class-II aminoacyl-tRNA synthetase family. In terms of assembly, homodimer.

It localises to the cytoplasm. It catalyses the reaction tRNA(His) + L-histidine + ATP = L-histidyl-tRNA(His) + AMP + diphosphate + H(+). This chain is Histidine--tRNA ligase, found in Streptococcus pneumoniae (strain P1031).